Consider the following 221-residue polypeptide: Pyridoxine/pyridoxamine 5'-phosphate oxidase (221 aa).

Substrate is bound by residues 14–17 and lysine 73; that span reads RNEY. FMN is bound by residues 68-73, 83-84, lysine 90, and glutamine 112; these read RTVLLK and FT. Residues tyrosine 130, arginine 134, and serine 138 each contribute to the substrate site. FMN-binding positions include 147 to 148 and tryptophan 193; that span reads QS. Substrate is bound at residue 199–201; sequence RLH. Position 203 (arginine 203) interacts with FMN.

The protein belongs to the pyridoxamine 5'-phosphate oxidase family. In terms of assembly, homodimer. It depends on FMN as a cofactor.

It carries out the reaction pyridoxamine 5'-phosphate + O2 + H2O = pyridoxal 5'-phosphate + H2O2 + NH4(+). It catalyses the reaction pyridoxine 5'-phosphate + O2 = pyridoxal 5'-phosphate + H2O2. It functions in the pathway cofactor metabolism; pyridoxal 5'-phosphate salvage; pyridoxal 5'-phosphate from pyridoxamine 5'-phosphate: step 1/1. The protein operates within cofactor metabolism; pyridoxal 5'-phosphate salvage; pyridoxal 5'-phosphate from pyridoxine 5'-phosphate: step 1/1. Functionally, catalyzes the oxidation of either pyridoxine 5'-phosphate (PNP) or pyridoxamine 5'-phosphate (PMP) into pyridoxal 5'-phosphate (PLP). In Salinispora arenicola (strain CNS-205), this protein is Pyridoxine/pyridoxamine 5'-phosphate oxidase.